We begin with the raw amino-acid sequence, 451 residues long: Phosphoglucosamine mutase (451 aa).

Ser102 serves as the catalytic Phosphoserine intermediate. 4 residues coordinate Mg(2+): Ser102, Asp243, Asp245, and Asp247. Residue Ser102 is modified to Phosphoserine.

The protein belongs to the phosphohexose mutase family. It depends on Mg(2+) as a cofactor. Post-translationally, activated by phosphorylation.

It catalyses the reaction alpha-D-glucosamine 1-phosphate = D-glucosamine 6-phosphate. In terms of biological role, catalyzes the conversion of glucosamine-6-phosphate to glucosamine-1-phosphate. This chain is Phosphoglucosamine mutase, found in Brucella canis (strain ATCC 23365 / NCTC 10854 / RM-666).